The sequence spans 73 residues: SAGLLTQEWSAVEDLLAQMSLPEADAQRDAEMVSTATGGGRMNQESIEPPNNLPPRERKAGCKNFYWKGFTSC.

A propeptide spanning residues 1 to 45 (SAGLLTQEWSAVEDLLAQMSLPEADAQRDAEMVSTATGGGRMNQE) is cleaved from the precursor. A disordered region spans residues 23–58 (EADAQRDAEMVSTATGGGRMNQESIEPPNNLPPRER). An intrachain disulfide couples Cys62 to Cys73.

The protein belongs to the somatostatin family.

It localises to the secreted. Functionally, somatostatin inhibits the release of somatotropin. The sequence is that of Somatostatin-2 (sst2) from Platichthys flesus (European flounder).